The primary structure comprises 226 residues: 7-cyano-7-deazaguanine synthase (226 aa).

Ile8–Leu18 serves as a coordination point for ATP. Cys188, Cys198, Cys201, and Cys204 together coordinate Zn(2+).

The protein belongs to the QueC family. The cofactor is Zn(2+).

The enzyme catalyses 7-carboxy-7-deazaguanine + NH4(+) + ATP = 7-cyano-7-deazaguanine + ADP + phosphate + H2O + H(+). It participates in purine metabolism; 7-cyano-7-deazaguanine biosynthesis. Catalyzes the ATP-dependent conversion of 7-carboxy-7-deazaguanine (CDG) to 7-cyano-7-deazaguanine (preQ(0)). In Coxiella burnetii (strain RSA 331 / Henzerling II), this protein is 7-cyano-7-deazaguanine synthase.